Reading from the N-terminus, the 441-residue chain is Ribosomal protein uS12 methylthiotransferase RimO (441 aa).

Positions 7–117 constitute an MTTase N-terminal domain; it reads PKISFVSLGC…VLEAVHRASP (111 aa). [4Fe-4S] cluster-binding residues include Cys16, Cys52, Cys81, Cys148, Cys152, and Cys155. In terms of domain architecture, Radical SAM core spans 134–371; it reads LTPRHYAYLK…MARQQKISAR (238 aa). Residues 374-440 form the TRAM domain; that stretch reads KRKVGTRQQI…EYDLHGTVAG (67 aa).

The protein belongs to the methylthiotransferase family. RimO subfamily. Requires [4Fe-4S] cluster as cofactor.

The protein localises to the cytoplasm. It carries out the reaction L-aspartate(89)-[ribosomal protein uS12]-hydrogen + (sulfur carrier)-SH + AH2 + 2 S-adenosyl-L-methionine = 3-methylsulfanyl-L-aspartate(89)-[ribosomal protein uS12]-hydrogen + (sulfur carrier)-H + 5'-deoxyadenosine + L-methionine + A + S-adenosyl-L-homocysteine + 2 H(+). Catalyzes the methylthiolation of an aspartic acid residue of ribosomal protein uS12. This is Ribosomal protein uS12 methylthiotransferase RimO from Bradyrhizobium sp. (strain BTAi1 / ATCC BAA-1182).